We begin with the raw amino-acid sequence, 389 residues long: Alanine racemase (389 aa).

Lys-48 serves as the catalytic Proton acceptor; specific for D-alanine. At Lys-48 the chain carries N6-(pyridoxal phosphate)lysine. A substrate-binding site is contributed by Arg-144. Catalysis depends on Tyr-281, which acts as the Proton acceptor; specific for L-alanine. Met-329 contributes to the substrate binding site.

This sequence belongs to the alanine racemase family. Requires pyridoxal 5'-phosphate as cofactor.

The catalysed reaction is L-alanine = D-alanine. It functions in the pathway amino-acid biosynthesis; D-alanine biosynthesis; D-alanine from L-alanine: step 1/1. Functionally, catalyzes the interconversion of L-alanine and D-alanine. May also act on other amino acids. This Leptospira interrogans serogroup Icterohaemorrhagiae serovar copenhageni (strain Fiocruz L1-130) protein is Alanine racemase (alr).